A 183-amino-acid polypeptide reads, in one-letter code: Adenine phosphoribosyltransferase (183 aa).

This sequence belongs to the purine/pyrimidine phosphoribosyltransferase family. In terms of assembly, homodimer.

Its subcellular location is the cytoplasm. The catalysed reaction is AMP + diphosphate = 5-phospho-alpha-D-ribose 1-diphosphate + adenine. It functions in the pathway purine metabolism; AMP biosynthesis via salvage pathway; AMP from adenine: step 1/1. Its function is as follows. Catalyzes a salvage reaction resulting in the formation of AMP, that is energically less costly than de novo synthesis. The chain is Adenine phosphoribosyltransferase from Klebsiella pneumoniae (strain 342).